A 1433-amino-acid chain; its full sequence is Probable ATP-dependent RNA helicase spindle-E (1433 aa).

Positions 126-294 constitute a Helicase ATP-binding domain; that stretch reads INAINENPVV…FANERSAPPV (169 aa). Position 139-146 (139-146) interacts with ATP; that stretch reads GETGCGKT. Residues 240–243 carry the DEAH box motif; sequence DEVH. The 172-residue stretch at 355–526 folds into the Helicase C-terminal domain; sequence TGKSYNQSLR…NCVLKAKELK (172 aa). The region spanning 935–998 is the Tudor domain; the sequence is AGAITKGLML…RLMSQDLLRH (64 aa).

This sequence belongs to the DEAD box helicase family. DEAH subfamily.

Its subcellular location is the cytoplasm. It carries out the reaction ATP + H2O = ADP + phosphate + H(+). Its function is as follows. Probable ATP-binding RNA helicase which plays a central role during spermatogenesis and oogenesis by repressing transposable elements and preventing their mobilization, which is essential for the germline integrity. Acts via the piRNA metabolic process, which mediates the repression of transposable elements during meiosis by forming complexes composed of piRNAs and Piwi and govern the methylation and subsequent repression of transposons. Involved in the repression of LTR retrotransposon copia. Also involved in telomere regulation by repressing specialized telomeric retroelements HeT-A, TAHRE, and TART; Drosophila telomeres being maintained by transposition of specialized telomeric retroelements. Involved in telomeric trans-silencing, a repression mechanism by which a transposon or a transgene inserted in subtelomeric heterochromatin has the capacity to repress in trans in the female germline, a homologous transposon, or transgene located in euchromatin. Involved in the repression of testis-expressed Stellate genes by the homologous Su(Ste) repeats. Required for anteroposterior and dorsoventral axis formation during oogenesis. The sequence is that of Probable ATP-dependent RNA helicase spindle-E (spn-E) from Drosophila pseudoobscura pseudoobscura (Fruit fly).